A 216-amino-acid polypeptide reads, in one-letter code: LexA repressor (216 aa).

Positions 28–48 form a DNA-binding region, H-T-H motif; the sequence is RAEIAAELGFSSANSAEEHLR. Catalysis depends on for autocatalytic cleavage activity residues serine 134 and lysine 171.

The protein belongs to the peptidase S24 family. Homodimer.

The catalysed reaction is Hydrolysis of Ala-|-Gly bond in repressor LexA.. Represses a number of genes involved in the response to DNA damage (SOS response), including recA and lexA. In the presence of single-stranded DNA, RecA interacts with LexA causing an autocatalytic cleavage which disrupts the DNA-binding part of LexA, leading to derepression of the SOS regulon and eventually DNA repair. In Paraburkholderia phytofirmans (strain DSM 17436 / LMG 22146 / PsJN) (Burkholderia phytofirmans), this protein is LexA repressor.